Reading from the N-terminus, the 350-residue chain is dTDP-D-glucose 4,6-dehydratase (350 aa).

Threonine 142 lines the substrate pocket. Aspartate 143 functions as the Proton donor in the catalytic mechanism. Catalysis depends on proton acceptor residues glutamate 144 and tyrosine 166.

Belongs to the NAD(P)-dependent epimerase/dehydratase family. dTDP-glucose dehydratase subfamily. The cofactor is NAD(+).

The enzyme catalyses dTDP-alpha-D-glucose = dTDP-4-dehydro-6-deoxy-alpha-D-glucose + H2O. This chain is dTDP-D-glucose 4,6-dehydratase (TGDS), found in Homo sapiens (Human).